Here is a 178-residue protein sequence, read N- to C-terminus: Photosystem II extrinsic protein V (178 aa).

The N-terminal stretch at 1-38 (MFSKFFSLQKAFAAARRRLLILILVLGMAGYAWGPALA) is a signal peptide. Heme c contacts are provided by Cys-71, Cys-74, His-75, and His-126.

The protein belongs to the cytochrome c family. PsbV subfamily. In terms of assembly, PSII is composed of 1 copy each of membrane proteins PsbA, PsbB, PsbC, PsbD, PsbE, PsbF, PsbH, PsbI, PsbJ, PsbK, PsbL, PsbM, PsbT, PsbX, PsbY, PsbZ, Psb30/Ycf12, peripheral proteins PsbO, CyanoQ (PsbQ), PsbU, PsbV and a large number of cofactors. It forms dimeric complexes. It depends on heme c as a cofactor.

It localises to the cellular thylakoid membrane. One of the extrinsic, lumenal subunits of photosystem II (PSII). PSII is a light-driven water plastoquinone oxidoreductase, using light energy to abstract electrons from H(2)O, generating a proton gradient subsequently used for ATP formation. The extrinsic proteins stabilize the structure of photosystem II oxygen-evolving complex (OEC), the ion environment of oxygen evolution and protect the OEC against heat-induced inactivation. Low-potential cytochrome c that plays a role in the OEC of PSII. This chain is Photosystem II extrinsic protein V, found in Synechococcus sp. (strain JA-3-3Ab) (Cyanobacteria bacterium Yellowstone A-Prime).